Consider the following 455-residue polypeptide: Exodeoxyribonuclease 7 large subunit (455 aa).

The protein belongs to the XseA family. In terms of assembly, heterooligomer composed of large and small subunits.

Its subcellular location is the cytoplasm. The enzyme catalyses Exonucleolytic cleavage in either 5'- to 3'- or 3'- to 5'-direction to yield nucleoside 5'-phosphates.. Functionally, bidirectionally degrades single-stranded DNA into large acid-insoluble oligonucleotides, which are then degraded further into small acid-soluble oligonucleotides. The protein is Exodeoxyribonuclease 7 large subunit of Koribacter versatilis (strain Ellin345).